Here is a 490-residue protein sequence, read N- to C-terminus: UDP-N-acetylmuramoyl-L-alanyl-D-glutamate--2,6-diaminopimelate ligase (490 aa).

UDP-N-acetyl-alpha-D-muramoyl-L-alanyl-D-glutamate contacts are provided by residues Leu22, Ser24, and 39–41 (HQT). 111–117 (GTNGKTT) contributes to the ATP binding site. Residues Asn152, 153-154 (TT), Ser180, Gln186, and Arg188 contribute to the UDP-N-acetyl-alpha-D-muramoyl-L-alanyl-D-glutamate site. Lys220 carries the post-translational modification N6-carboxylysine. Residues Arg385, 409-412 (DNPR), Gly460, and Glu464 each bind meso-2,6-diaminopimelate. Positions 409-412 (DNPR) match the Meso-diaminopimelate recognition motif motif.

The protein belongs to the MurCDEF family. MurE subfamily. Requires Mg(2+) as cofactor. In terms of processing, carboxylation is probably crucial for Mg(2+) binding and, consequently, for the gamma-phosphate positioning of ATP.

It is found in the cytoplasm. It carries out the reaction UDP-N-acetyl-alpha-D-muramoyl-L-alanyl-D-glutamate + meso-2,6-diaminopimelate + ATP = UDP-N-acetyl-alpha-D-muramoyl-L-alanyl-gamma-D-glutamyl-meso-2,6-diaminopimelate + ADP + phosphate + H(+). It participates in cell wall biogenesis; peptidoglycan biosynthesis. Catalyzes the addition of meso-diaminopimelic acid to the nucleotide precursor UDP-N-acetylmuramoyl-L-alanyl-D-glutamate (UMAG) in the biosynthesis of bacterial cell-wall peptidoglycan. The polypeptide is UDP-N-acetylmuramoyl-L-alanyl-D-glutamate--2,6-diaminopimelate ligase (Yersinia pestis).